A 987-amino-acid polypeptide reads, in one-letter code: Voltage-gated delayed rectifier potassium channel KCNH1 (987 aa).

The Cytoplasmic portion of the chain corresponds to 1 to 220 (MTMAGGRKGL…LHYCVFKTTW (220 aa)). The PAS domain occupies 14-94 (QNTFLENIVR…QTFENYEMNS (81 aa)). The region spanning 93–145 (NSFEILMYKKNRTPVWFFVKIAPIRNEQDKVVLFLCTFSDITAFKQPIEDDSC) is the PAC domain. Positions 151-162 (FARLTRALTSSR) are required for phosphatidylinositol bisphosphate binding. The chain crosses the membrane as a helical span at residues 221–241 (DWIILILTFYTAILVPYNVSF). The Extracellular segment spans residues 242 to 248 (KTRQNNV). Residues 249 to 269 (AWLVVDSIVDVIFLVDIVLNF) form a helical membrane-spanning segment. Topologically, residues 270 to 290 (HTTFVGPAGEVISDPKLIRMN) are cytoplasmic. The helical transmembrane segment at 291–309 (YLKTWFVIDLLSCLPYDVI) threads the bilayer. Residues 310–345 (NAFENVDEVSAFMGDPGKIGFADQIPPPLEGRESQG) are Extracellular-facing. Residues 346-368 (ISSLFSSLKVVRLLRLGRVARKL) form a helical; Voltage-sensor membrane-spanning segment. The Cytoplasmic portion of the chain corresponds to 369–377 (DHYIEYGAA). A helical membrane pass occupies residues 378–399 (VLVLLVCVFGLAAHWMACIWYS). Residues 400–448 (IGDYEIFDEDTKTIRNNSWLYQLAMDIGTPYQFNGSGSGKWEGGPSKNS) lie on the Extracellular side of the membrane. N-linked (GlcNAc...) asparagine glycans are attached at residues Asn-415 and Asn-433. The segment at residues 449–470 (VYISSLYFTMTSLTSVGFGNIA) is an intramembrane region (pore-forming). A Selectivity filter motif is present at residues 463–468 (SVGFGN). Residues 471 to 477 (PSTDIEK) are Extracellular-facing. A helical membrane pass occupies residues 478 to 498 (IFAVAIMMIGSLLYATIFGNV). Residues 499–987 (TTIFQQMYAN…ESERDIFGAS (489 aa)) are Cytoplasmic-facing. The tract at residues 673–770 (KRDALQKVLE…LDDLDVEKGS (98 aa)) is calmodulin-binding. Positions 699-701 (YNL) are interaction with cyclic nucleotide-binding pocket. The CAD (involved in subunit assembly) stretch occupies residues 922 to 962 (AAVLEVKHELKEDIKALSTKMTSIEKQLSEILRILTSRRSS). A disordered region spans residues 960 to 987 (RSSQSPQELFEISRPQSPESERDIFGAS). Phosphoserine is present on residues Ser-972, Ser-976, and Ser-979. Positions 978 to 987 (ESERDIFGAS) are enriched in basic and acidic residues.

The protein belongs to the potassium channel family. H (Eag) (TC 1.A.1.20) subfamily. Kv10.1/KCNH1 sub-subfamily. Homomultimer. The potassium channel is composed of a homo- or heterotetrameric complex of pore-forming alpha subunits that can associate with modulating beta subunits. Heteromultimer with KCNH5/EAG2. Interacts with ALG10B. Interacts with RABEP1. Interacts (via C-terminus) with CTTN. Interacts (via C-terminal cytoplasmic region) with Ca(2+)-bound calmodulin. In terms of processing, channel activity is regulated via tyrosine phosphorylation/dephosphorylation by SRC and PTPN6. In terms of tissue distribution, detected in cerebellum, cortex and retina.

It is found in the cell membrane. It localises to the nucleus inner membrane. The protein localises to the cell projection. Its subcellular location is the dendrite. The protein resides in the axon. It is found in the presynaptic cell membrane. It localises to the perikaryon. The protein localises to the postsynaptic density membrane. Its subcellular location is the early endosome membrane. The catalysed reaction is K(+)(in) = K(+)(out). Its activity is regulated as follows. Channel activity is inhibited by interaction with Ca(2+)-bound calmodulin. Interaction of a single pore-forming alpha subunit with a calmodulin chain is sufficient to promote channel closure. Extracellular magnesium ion concentrations up to 4 mM modulate channel activity by slowing down current activation in a reversible fashion. Channel activity is not regulated by cyclic nucleotides. Channel activity is inhibited by binding intracellular phosphatidylinositol-3,5-bisphosphate and phosphatidylinositol-4,5-bisphosphate (PIP2), but is not inhibited by phosphatidylinositol 4-phosphate. In terms of biological role, pore-forming (alpha) subunit of a voltage-gated delayed rectifier potassium channel that mediates outward-rectifying potassium currents which, on depolarization, reaches a steady-state level and do not inactivate. The activation kinetics depend on the prepulse potential and external divalent cation concentration. With negative prepulses, the current activation is delayed and slowed down several fold, whereas more positive prepulses speed up activation. The time course of activation is biphasic with a fast and a slowly activating current component. Activates at more positive membrane potentials and exhibit a steeper activation curve. Channel properties are modulated by subunit assembly. Mediates IK(NI) current in myoblasts. Involved in the regulation of cell proliferation and differentiation, in particular adipogenic and osteogenic differentiation in bone marrow-derived mesenchymal stem cells (MSCs). The protein is Voltage-gated delayed rectifier potassium channel KCNH1 of Bos taurus (Bovine).